Here is a 219-residue protein sequence, read N- to C-terminus: Orotate phosphoribosyltransferase (219 aa).

Lys-26 contacts 5-phospho-alpha-D-ribose 1-diphosphate. Residue 34 to 35 participates in orotate binding; sequence FF. 5-phospho-alpha-D-ribose 1-diphosphate is bound by residues 72-73, Arg-98, Lys-99, Lys-102, His-104, and 124-132; these read YK and DDVITAGTA. Residues Thr-128 and Arg-156 each coordinate orotate.

It belongs to the purine/pyrimidine phosphoribosyltransferase family. PyrE subfamily. Homodimer. It depends on Mg(2+) as a cofactor.

The enzyme catalyses orotidine 5'-phosphate + diphosphate = orotate + 5-phospho-alpha-D-ribose 1-diphosphate. Its pathway is pyrimidine metabolism; UMP biosynthesis via de novo pathway; UMP from orotate: step 1/2. In terms of biological role, catalyzes the transfer of a ribosyl phosphate group from 5-phosphoribose 1-diphosphate to orotate, leading to the formation of orotidine monophosphate (OMP). In Xylella fastidiosa (strain M23), this protein is Orotate phosphoribosyltransferase.